Here is a 569-residue protein sequence, read N- to C-terminus: Dihydroxy-acid dehydratase (569 aa).

Cys61 contacts [2Fe-2S] cluster. Asp93 is a Mg(2+) binding site. Cys134 contacts [2Fe-2S] cluster. Positions 135 and 136 each coordinate Mg(2+). At Lys136 the chain carries N6-carboxylysine. A [2Fe-2S] cluster-binding site is contributed by Cys211. Mg(2+) is bound at residue Glu462. Ser488 functions as the Proton acceptor in the catalytic mechanism.

This sequence belongs to the IlvD/Edd family. Homodimer. Requires [2Fe-2S] cluster as cofactor. Mg(2+) serves as cofactor.

It carries out the reaction (2R)-2,3-dihydroxy-3-methylbutanoate = 3-methyl-2-oxobutanoate + H2O. The enzyme catalyses (2R,3R)-2,3-dihydroxy-3-methylpentanoate = (S)-3-methyl-2-oxopentanoate + H2O. It functions in the pathway amino-acid biosynthesis; L-isoleucine biosynthesis; L-isoleucine from 2-oxobutanoate: step 3/4. Its pathway is amino-acid biosynthesis; L-valine biosynthesis; L-valine from pyruvate: step 3/4. Functions in the biosynthesis of branched-chain amino acids. Catalyzes the dehydration of (2R,3R)-2,3-dihydroxy-3-methylpentanoate (2,3-dihydroxy-3-methylvalerate) into 2-oxo-3-methylpentanoate (2-oxo-3-methylvalerate) and of (2R)-2,3-dihydroxy-3-methylbutanoate (2,3-dihydroxyisovalerate) into 2-oxo-3-methylbutanoate (2-oxoisovalerate), the penultimate precursor to L-isoleucine and L-valine, respectively. The sequence is that of Dihydroxy-acid dehydratase from Tropheryma whipplei (strain Twist) (Whipple's bacillus).